The chain runs to 175 residues: Interferon gamma (175 aa).

Residues 1-23 form the signal peptide; sequence MNATCCILALLLCLTQAISGCYC. Glutamine 24 is modified (pyrrolidone carboxylic acid). 2 N-linked (GlcNAc...) asparagine glycosylation sites follow: asparagine 39 and asparagine 106.

It belongs to the type II (or gamma) interferon family. Homodimer. Interacts with IFNGR1 (via extracellular domain); this interaction promotes IFNGR1 dimerization. In terms of tissue distribution, released primarily from activated T lymphocytes.

It localises to the secreted. Functionally, type II interferon produced by immune cells such as T-cells and NK cells that plays crucial roles in antimicrobial, antiviral, and antitumor responses by activating effector immune cells and enhancing antigen presentation. Primarily signals through the JAK-STAT pathway after interaction with its receptor IFNGR1 to affect gene regulation. Upon IFNG binding, IFNGR1 intracellular domain opens out to allow association of downstream signaling components JAK2, JAK1 and STAT1, leading to STAT1 activation, nuclear translocation and transcription of IFNG-regulated genes. Many of the induced genes are transcription factors such as IRF1 that are able to further drive regulation of a next wave of transcription. Plays a role in class I antigen presentation pathway by inducing a replacement of catalytic proteasome subunits with immunoproteasome subunits. In turn, increases the quantity, quality, and repertoire of peptides for class I MHC loading. Increases the efficiency of peptide generation also by inducing the expression of activator PA28 that associates with the proteasome and alters its proteolytic cleavage preference. Up-regulates as well MHC II complexes on the cell surface by promoting expression of several key molecules such as cathepsins B/CTSB, H/CTSH, and L/CTSL. Participates in the regulation of hematopoietic stem cells during development and under homeostatic conditions by affecting their development, quiescence, and differentiation. The chain is Interferon gamma (IFNG) from Peromyscus maniculatus (North American deer mouse).